Consider the following 560-residue polypeptide: Trans-activating transcriptional regulatory protein (560 aa).

Disordered stretches follow at residues 1-25 (MPKN…LFNN) and 99-134 (TGAE…LVNK).

This sequence belongs to the nucleopolyhedrovirus IE-1 protein family.

Regulatory transcriptional protein, which trans-activates gene expression from early baculovirus promoters. Can also trans-activate its own promoter, suggesting that it is autoregulated during normal infection of insect cells. This chain is Trans-activating transcriptional regulatory protein (IE1), found in Orgyia pseudotsugata (Douglas-fir tussock moth).